Here is a 209-residue protein sequence, read N- to C-terminus: Large ribosomal subunit protein uL3 (209 aa).

The tract at residues 130 to 162 (RGPMTHGSKFKRAPGSMGASSDPSRTFKNKRMP) is disordered.

The protein belongs to the universal ribosomal protein uL3 family. Part of the 50S ribosomal subunit. Forms a cluster with proteins L14 and L19.

In terms of biological role, one of the primary rRNA binding proteins, it binds directly near the 3'-end of the 23S rRNA, where it nucleates assembly of the 50S subunit. The polypeptide is Large ribosomal subunit protein uL3 (Clostridium botulinum (strain Alaska E43 / Type E3)).